A 346-amino-acid chain; its full sequence is Histidinol-phosphate aminotransferase (346 aa).

Lys209 carries the post-translational modification N6-(pyridoxal phosphate)lysine.

This sequence belongs to the class-II pyridoxal-phosphate-dependent aminotransferase family. Histidinol-phosphate aminotransferase subfamily. In terms of assembly, homodimer. Pyridoxal 5'-phosphate serves as cofactor.

The catalysed reaction is L-histidinol phosphate + 2-oxoglutarate = 3-(imidazol-4-yl)-2-oxopropyl phosphate + L-glutamate. It functions in the pathway amino-acid biosynthesis; L-histidine biosynthesis; L-histidine from 5-phospho-alpha-D-ribose 1-diphosphate: step 7/9. This is Histidinol-phosphate aminotransferase from Aliivibrio fischeri (strain MJ11) (Vibrio fischeri).